The sequence spans 178 residues: Large ribosomal subunit protein uL6 (178 aa).

The protein belongs to the universal ribosomal protein uL6 family. As to quaternary structure, part of the 50S ribosomal subunit.

In terms of biological role, this protein binds to the 23S rRNA, and is important in its secondary structure. It is located near the subunit interface in the base of the L7/L12 stalk, and near the tRNA binding site of the peptidyltransferase center. The sequence is that of Large ribosomal subunit protein uL6 from Helicobacter pylori (strain G27).